The sequence spans 366 residues: Probable S-adenosyl-L-methionine-binding protein AF_0433 (366 aa).

The 131-residue stretch at 6–136 (LRQVGVIRSP…YSSTIDSVGN (131 aa)) folds into the TsaA-like domain. S-adenosyl-L-methionine is bound by residues 23-25 (PHQ), 61-62 (DR), arginine 85, and 116-119 (LDGT).

The protein belongs to the tRNA methyltransferase O family.

This Archaeoglobus fulgidus (strain ATCC 49558 / DSM 4304 / JCM 9628 / NBRC 100126 / VC-16) protein is Probable S-adenosyl-L-methionine-binding protein AF_0433.